Reading from the N-terminus, the 304-residue chain is L-xylo-3-hexulose reductase (304 aa).

NADP(+) contacts are provided by Ile19, Asp68, and Asn107. Catalysis depends on proton donor residues Ser163 and Ser164. NADP(+) is bound by residues Tyr177, Lys181, and Ala209. The active-site Proton acceptor is the Tyr177. Lys181 (lowers pKa of active site Tyr) is an active-site residue.

Belongs to the short-chain dehydrogenases/reductases (SDR) family.

It catalyses the reaction D-sorbitol + NADP(+) = L-xylo-3-hexulose + NADPH + H(+). It functions in the pathway carbohydrate degradation. In terms of biological role, L-xylulose reductase involved in the catabolism of D-galactose through an oxidoreductive pathway. Catalyzes the NADPH-dependent reduction of L-xylo-3-hexulose. Is also active with D-ribulose and L-xylulose, and to a lesser extent with D-xylulose, D-fructose and L- and D-sorbose. In the reverse reaction, shows activity with D-sorbitol and D-mannitol, low activity with xylitol, but no activity with galactitol, ribitol, and L- and D-arabitol. This Hypocrea jecorina (strain QM6a) (Trichoderma reesei) protein is L-xylo-3-hexulose reductase.